We begin with the raw amino-acid sequence, 1190 residues long: Ras-specific guanine nucleotide-releasing factor 2 (1190 aa).

The PH 1 domain occupies 22-133; sequence EGTKRGFLSK…WMEAIHQASY (112 aa). Residues 155-193 are a coiled coil; it reads ETEKIAANQLRHQLEDQDTEIERLKSEIVALNKTKERMR. Positions 205–234 constitute an IQ domain; sequence DIKKIKKVQSFMRGWLCRRKWKTIVQDYIC. One can recognise a DH domain in the interval 243–429; sequence KRNQIVFTMV…EELSRVMHDE (187 aa). The region spanning 470-588 is the PH 2 domain; that stretch reads PSVERGKLSK…WMSDISQCVD (119 aa). The region spanning 635 to 755 is the N-terminal Ras-GEF domain; that stretch reads KVPQIRYASV…LTSSLNSRIG (121 aa). Residues 713 to 744 form a disordered region; the sequence is VDGKSPRLCRKFSSPPPLAVSRTSSPVRARKL. Phosphoserine is present on residues Ser725 and Ser726. Ser736 carries the phosphoserine; by CDK5 modification. The interval 743-751 is regulates proteasomal degradation; it reads KLSLTSSLN. Residues Ser745 and Ser749 each carry the phosphoserine modification. Positions 757–826 are disordered; the sequence is LDLTTSSSSS…QPGGQVADST (70 aa). A compositionally biased stretch (low complexity) spans 760–776; the sequence is TTSSSSSSPTTTVHSPA. A compositionally biased stretch (polar residues) spans 798–810; sequence TDMSPCRSPSTTP. Phosphoserine is present on residues Ser801, Ser805, and Ser925. The 233-residue stretch at 955-1187 folds into the Ras-GEF domain; it reads SAMELAEQIT…YELSLKIEPR (233 aa). A responsible of the affinity for farnesylated versus geranylgeranylated Ras region spans residues 1052 to 1081; sequence ALNRSAIYRLKKTWTKVSKQTKALMDKLQK.

As to quaternary structure, homooligomer and heterooligomer with RASGRF1. Interacts with Ras and RAC1. Interacts in a calcium-dependent manner with calmodulin. Interacts with CDK5R1 and probably EPB49. Interacts with the AMPA receptor through GRIA1. Interacts with microtubules. Phosphorylated by CDK5; down-regulates RASGRF2-mediated RAC1 activation. In terms of processing, ubiquitinated upon interaction with Ras. Ubiquitination leads to degradation through the 26S proteasome. In terms of tissue distribution, widely expressed. Detected in brain, lung, spleen, pancreas, kidney, liver, heart, mammary gland and skeletal muscle.

Its subcellular location is the cytoplasm. It localises to the cell membrane. The protein localises to the endoplasmic reticulum membrane. Functionally, functions as a calcium-regulated nucleotide exchange factor activating both Ras and RAC1 through the exchange of bound GDP for GTP. Preferentially activates HRAS in vivo compared to RRAS based on their different types of prenylation. Functions in synaptic plasticity by contributing to the induction of long term potentiation. The protein is Ras-specific guanine nucleotide-releasing factor 2 (Rasgrf2) of Rattus norvegicus (Rat).